The following is a 247-amino-acid chain: Particulate methane monooxygenase beta subunit (247 aa).

6 helical membrane passes run 23-43 (WMALFVVFFVIVGSYHIHAML), 59-79 (LWVTVTPIVLVTFPAAVQSYL), 86-106 (PWGATVCVLGLLLGEWINRYF), 111-131 (WTYFPINFVFPASLVPGAIIL), 145-165 (AIVGAMGWGLIFYPGNWPIIA), and 215-235 (VSAFFSAFMSILIYFMWHFIG).

In terms of assembly, m.capsulatus has two forms of methane monooxygenase, a soluble (sMMO) and a membrane-bound (particulate) type (pMMO). The particulate type is a nonamer composed of three alpha:beta:gamma heterotrimeric protomers assembled into a cylindrical structure; the beta and gamma subunits comprise the bulk of the membrane-spanning regions and the soluble regions are derived primarily from alpha subunits which form two antiparallel beta-barrel-like structures each. This assembly, also called pMMO hydroxylase (pMMO-H), is proposed to associate with methanol dehydrogenase (MDH), also designated as pMMO-R, to form the pMMO-C complex which seems to have greater methane monooxygenase activity.

It localises to the membrane. The catalysed reaction is methane + a quinol + O2 = methanol + a quinone + H2O. Non-catalytic subunit of the methane monooxygenase that is responsible for the initial oxygenation of methane to methanol in methanotrophs. At least in vitro, specific quinols can replace NADH as reductants. This Methylococcus capsulatus (strain ATCC 33009 / NCIMB 11132 / Bath) protein is Particulate methane monooxygenase beta subunit (pmoA1).